Reading from the N-terminus, the 1414-residue chain is Phenyloxazoline synthase MbtB (1414 aa).

The 74-residue stretch at 5-78 (TACSEIIRAE…AWSQLVSAGT (74 aa)) folds into the Carrier 1 domain. An O-(pantetheine 4'-phosphoryl)serine modification is found at Ser-39. The tract at residues 96–394 (EGEPFPLAPM…SSLLLDVDLT (299 aa)) is condensation/cyclization. An adenylation region spans residues 579–975 (SYAQLRDQAS…RLPGVHAAAA (397 aa)). The Carrier 2 domain occupies 1057 to 1135 (APRTVLQRAL…ALAQLLTGRE (79 aa)). At Ser-1094 the chain carries O-(pantetheine 4'-phosphoryl)serine. The thioesterase stretch occupies residues 1188–1413 (GAVLVFPHAG…AVARMVSADV (226 aa)).

This sequence belongs to the ATP-dependent AMP-binding enzyme family. MbtB subfamily. It depends on pantetheine 4'-phosphate as a cofactor. Post-translationally, 4'-phosphopantetheine is transferred from CoA to a specific serine in each of the two carrier protein domains, leading to their activation from apo to holo forms.

It participates in siderophore biosynthesis; mycobactin biosynthesis. In terms of biological role, involved in the initial steps of the mycobactin biosynthetic pathway. Putatively couples activated salicylic acid with serine or threonine and cyclizes this precursor to the hydroxyphenyloxazoline ring system present in this class of siderophores. Essential for growth in macrophages. This Mycobacterium tuberculosis (strain ATCC 25618 / H37Rv) protein is Phenyloxazoline synthase MbtB (mbtB).